A 33-amino-acid chain; its full sequence is Putative tumor antigen NA88-A (33 aa).

Expressed in testis and melanoma cell lines.

This is Putative tumor antigen NA88-A (VENTXP1) from Homo sapiens (Human).